The sequence spans 186 residues: Putative 5'(3')-deoxyribonucleotidase (186 aa).

Belongs to the 5'(3')-deoxyribonucleotidase family. Requires Mg(2+) as cofactor.

Its function is as follows. Dephosphorylates the 5' and 2'(3')-phosphates of deoxyribonucleotides. This chain is Putative 5'(3')-deoxyribonucleotidase, found in Bordetella parapertussis (strain 12822 / ATCC BAA-587 / NCTC 13253).